A 506-amino-acid polypeptide reads, in one-letter code: Histidine--tRNA ligase, mitochondrial (506 aa).

The N-terminal 33 residues, 1-33, are a transit peptide targeting the mitochondrion; sequence MPQLGLLPGRAWTVLLGLLRPPPGALCIRAVRS. The residue at position 67 (serine 67) is a Phosphoserine. L-histidine-binding positions include 131–133, arginine 158, glutamine 174, aspartate 178, arginine 327, and 331–332; these read DLT and YY. Lysine 444 carries the N6-acetyllysine modification.

This sequence belongs to the class-II aminoacyl-tRNA synthetase family. In terms of assembly, homodimer.

Its subcellular location is the mitochondrion. The enzyme catalyses tRNA(His) + L-histidine + ATP = L-histidyl-tRNA(His) + AMP + diphosphate + H(+). Its function is as follows. Mitochondrial aminoacyl-tRNA synthetase that catalyzes the ATP-dependent ligation of histidine to the 3'-end of its cognate tRNA, via the formation of an aminoacyl-adenylate intermediate (His-AMP). This chain is Histidine--tRNA ligase, mitochondrial (HARS2), found in Bos taurus (Bovine).